Here is a 403-residue protein sequence, read N- to C-terminus: 8-amino-7-oxononanoate synthase (403 aa).

Arg25 serves as a coordination point for substrate. A pyridoxal 5'-phosphate-binding site is contributed by 112 to 113; it reads GY. Residue His137 participates in substrate binding. The pyridoxal 5'-phosphate site is built by Ser182, His210, and Thr239. An N6-(pyridoxal phosphate)lysine modification is found at Lys242. Thr358 serves as a coordination point for substrate.

It belongs to the class-II pyridoxal-phosphate-dependent aminotransferase family. BioF subfamily. As to quaternary structure, homodimer. Requires pyridoxal 5'-phosphate as cofactor.

The catalysed reaction is 6-carboxyhexanoyl-[ACP] + L-alanine + H(+) = (8S)-8-amino-7-oxononanoate + holo-[ACP] + CO2. Its pathway is cofactor biosynthesis; biotin biosynthesis. Functionally, catalyzes the decarboxylative condensation of pimeloyl-[acyl-carrier protein] and L-alanine to produce 8-amino-7-oxononanoate (AON), [acyl-carrier protein], and carbon dioxide. This chain is 8-amino-7-oxononanoate synthase, found in Marinomonas sp. (strain MWYL1).